Reading from the N-terminus, the 462-residue chain is tRNA modification GTPase MnmE (462 aa).

3 residues coordinate (6S)-5-formyl-5,6,7,8-tetrahydrofolate: R22, E87, and R126. Residues 220 to 382 enclose the TrmE-type G domain; it reads GLKVAIVGRP…LARKVQEIVL (163 aa). N230 contacts K(+). GTP is bound by residues 230–235, 249–255, and 274–277; these read NVGKSS, SNIPGTT, and DTAG. Position 234 (S234) interacts with Mg(2+). K(+) contacts are provided by S249, I251, and T254. T255 contacts Mg(2+). (6S)-5-formyl-5,6,7,8-tetrahydrofolate is bound at residue K462.

Belongs to the TRAFAC class TrmE-Era-EngA-EngB-Septin-like GTPase superfamily. TrmE GTPase family. As to quaternary structure, homodimer. Heterotetramer of two MnmE and two MnmG subunits. The cofactor is K(+).

The protein resides in the cytoplasm. Exhibits a very high intrinsic GTPase hydrolysis rate. Involved in the addition of a carboxymethylaminomethyl (cmnm) group at the wobble position (U34) of certain tRNAs, forming tRNA-cmnm(5)s(2)U34. This is tRNA modification GTPase MnmE from Moorella thermoacetica (strain ATCC 39073 / JCM 9320).